The following is a 110-amino-acid chain: RNA silencing suppressor (110 aa).

The tract at residues 50–53 is basic; that stretch reads RRRR. Residues 60–81 form a C4-type zinc finger; it reads CERCYRVYPPLPFSKKCDNRTC.

The protein belongs to the carlaviruses nucleic acid-binding protein family.

Its function is as follows. Suppressor of viral-induced RNA silencing. The potential mechanism of action is based on sequestering siRNAs. The sequence is that of RNA silencing suppressor from Helenium virus S (HelVS).